The primary structure comprises 355 residues: Endonuclease III homolog (355 aa).

The Nuclear localization signal motif lies at proline 44 to glutamine 50. Residues phenylalanine 122 to serine 149 form the HhH domain. Lysine 142 acts as the Nucleophile; for N-glycosylase activity in catalysis. [4Fe-4S] cluster is bound by residues cysteine 210, cysteine 217, cysteine 220, and cysteine 228. A Nuclear localization signal motif is present at residues lysine 252–proline 255. A disordered region spans residues lysine 303–valine 355. Residues lysine 338–glutamine 349 are compositionally biased toward polar residues.

This sequence belongs to the Nth/MutY family. It depends on [4Fe-4S] cluster as a cofactor.

It localises to the nucleus. The protein resides in the mitochondrion. It catalyses the reaction 2'-deoxyribonucleotide-(2'-deoxyribose 5'-phosphate)-2'-deoxyribonucleotide-DNA = a 3'-end 2'-deoxyribonucleotide-(2,3-dehydro-2,3-deoxyribose 5'-phosphate)-DNA + a 5'-end 5'-phospho-2'-deoxyribonucleoside-DNA + H(+). In terms of biological role, bifunctional DNA N-glycosylase with associated apurinic/apyrimidinic (AP) lyase function that catalyzes the first step in base excision repair (BER), the primary repair pathway for the repair of oxidative DNA damage. The DNA N-glycosylase activity releases the damaged DNA base from DNA by cleaving the N-glycosidic bond, leaving an AP site. The AP-lyase activity cleaves the phosphodiester bond 3' to the AP site by a beta-elimination. Primarily recognizes and repairs oxidative base damage of pyrimidines. Also has 8-oxo-7,8-dihydroguanine (8-oxoG) DNA glycosylase activity. Also involved in the repair of 7-methylguanine lesions, although it cannot directly repair alkylated DNA bases. Probably does so via excision of methylformamidopyrimidine (mFapy) lesions, a spontaneous processing product of 7-methylguanine. This chain is Endonuclease III homolog (nth1), found in Schizosaccharomyces pombe (strain 972 / ATCC 24843) (Fission yeast).